The following is a 421-amino-acid chain: Bestrophin homolog 2 (421 aa).

Helical transmembrane passes span 28-48, 73-93, 239-259, and 275-295; these read IWKA…IISV, LSFI…VDRW, LMYP…SIIA, and VYFP…LKVI.

Belongs to the anion channel-forming bestrophin (TC 1.A.46) family. Calcium-sensitive chloride channel subfamily. Forms oligomers.

The protein resides in the cell membrane. Functionally, forms chloride channels. This is Bestrophin homolog 2 (best-2) from Caenorhabditis elegans.